The sequence spans 523 residues: ATP synthase subunit alpha (523 aa).

179 to 186 (GDRQTGKT) serves as a coordination point for ATP.

Belongs to the ATPase alpha/beta chains family. In terms of assembly, F-type ATPases have 2 components, CF(1) - the catalytic core - and CF(0) - the membrane proton channel. CF(1) has five subunits: alpha(3), beta(3), gamma(1), delta(1), epsilon(1). CF(0) has three main subunits: a(1), b(2) and c(9-12). The alpha and beta chains form an alternating ring which encloses part of the gamma chain. CF(1) is attached to CF(0) by a central stalk formed by the gamma and epsilon chains, while a peripheral stalk is formed by the delta and b chains.

The protein localises to the cell inner membrane. It catalyses the reaction ATP + H2O + 4 H(+)(in) = ADP + phosphate + 5 H(+)(out). Its function is as follows. Produces ATP from ADP in the presence of a proton gradient across the membrane. The alpha chain is a regulatory subunit. This chain is ATP synthase subunit alpha, found in Vibrio parahaemolyticus serotype O3:K6 (strain RIMD 2210633).